Here is a 1098-residue protein sequence, read N- to C-terminus: Trehalose synthase complex regulatory subunit TSL1 (1098 aa).

8 positions are modified to phosphoserine: S49, S53, S56, S71, S77, S135, S147, and S161. Disordered stretches follow at residues 59–86 (APAP…RASS), 129–168 (SVER…QQQQ), and 192–244 (SQTS…PSIK). Residues 72–86 (RSATRSPSAFNRASS) are compositionally biased toward polar residues. 2 tandem repeats follow at residues 144–150 (RIASPIQ) and 158–164 (RIASPIQ). The tract at residues 144-164 (RIASPIQHEHDSGSRIASPIQ) is 2 X 7 AA repeats of R-I-A-S-P-I-Q. The segment covering 213–227 (RPTSAATSLVNRTKQ) has biased composition (polar residues). Residues 228 to 242 (GSASSGSSGSSAPPS) show a composition bias toward low complexity. A Phosphoserine modification is found at S229. T251 carries the phosphothreonine modification. A disordered region spans residues 274–297 (ADISSSETSSQHNESDPDDLTTAP). S303 is modified (phosphoserine). Residues 320-812 (GGYSNKSKLK…FNQEGSKIFK (493 aa)) are TPS complex domain. The residue at position 815 (T815) is a Phosphothreonine. A disordered region spans residues 1000 to 1027 (SSGQITNIQTPSQQNPSDQEQQPPASPT).

This sequence in the C-terminal section; belongs to the glycosyltransferase 20 family. In terms of assembly, the trehalose synthase complex is composed of the two catalytic subunits TPS1 and TPS2, and at least one of the two regulatory subunits TPS3 or TSL1.

The protein resides in the cytoplasm. In terms of biological role, regulatory subunit of the trehalose synthase complex that catalyzes the production of trehalose from glucose-6-phosphate and UDP-glucose in a two step process. May stabilize the trehalose synthase complex, and confer sensitivity to physiological concentrations of phosphate and to fructose 6-phosphate. The sequence is that of Trehalose synthase complex regulatory subunit TSL1 (TSL1) from Saccharomyces cerevisiae (strain ATCC 204508 / S288c) (Baker's yeast).